Reading from the N-terminus, the 108-residue chain is Probable chaperone-like protein YdbL (108 aa).

The signal sequence occupies residues 1–21 (MKKTLLLCAFLVGLVSSNVMA).

The protein localises to the periplasm. In terms of biological role, probably acts as a chaperone-like protein that contributes to, but is not required for, the formation of the YdbH-YnbE intermembrane bridge. Affects the function and the structure of the YdbH-YnbE complex. Overexpression of ydbL causes a negative effect on YdbH-YnbE function. This Escherichia coli (strain K12) protein is Probable chaperone-like protein YdbL (ydbL).